Consider the following 161-residue polypeptide: Troponin C, slow skeletal and cardiac muscles (161 aa).

Position 1 is an N-acetylmethionine (Met1). EF-hand domains lie at 16-51, 52-87, 92-127, and 128-161; these read QKNE…LGQN, PTPE…CMKD, KTEE…TGET, and ITED…KGVE. Ca(2+)-binding residues include Asp65, Asp67, Ser69, Thr71, Glu76, Asp105, Asn107, Asp109, Tyr111, Glu116, Asp141, Asn143, Asp145, Arg147, and Glu152.

The protein belongs to the troponin C family.

In terms of biological role, troponin is the central regulatory protein of striated muscle contraction. Tn consists of three components: Tn-I which is the inhibitor of actomyosin ATPase, Tn-T which contains the binding site for tropomyosin and Tn-C. The binding of calcium to Tn-C abolishes the inhibitory action of Tn on actin filaments. In Gallus gallus (Chicken), this protein is Troponin C, slow skeletal and cardiac muscles (TNNC1).